Here is a 95-residue protein sequence, read N- to C-terminus: Co-chaperonin GroES (95 aa).

The protein belongs to the GroES chaperonin family. Heptamer of 7 subunits arranged in a ring. Interacts with the chaperonin GroEL.

It localises to the cytoplasm. Its function is as follows. Together with the chaperonin GroEL, plays an essential role in assisting protein folding. The GroEL-GroES system forms a nano-cage that allows encapsulation of the non-native substrate proteins and provides a physical environment optimized to promote and accelerate protein folding. GroES binds to the apical surface of the GroEL ring, thereby capping the opening of the GroEL channel. The protein is Co-chaperonin GroES of Chlorobaculum tepidum (strain ATCC 49652 / DSM 12025 / NBRC 103806 / TLS) (Chlorobium tepidum).